Here is a 215-residue protein sequence, read N- to C-terminus: Ependymin-1 (215 aa).

The N-terminal stretch at Met-1–Ala-20 is a signal peptide. Residues Asn-71 and Asn-94 are each glycosylated (N-linked (GlcNAc...) asparagine).

It belongs to the ependymin family. Forms disulfide-linked dimers. Different glycosylation variants are known as EPD-beta and EPD-gamma. In terms of processing, binds calcium through the terminal sialic acids. As to expression, EPDs are synthesized in the meninx and secreted in the cerebrospinal fluid.

Its subcellular location is the secreted. In terms of biological role, may play a role in neural plasticity. May be involved during axon regeneration. The polypeptide is Ependymin-1 (epd1) (Carassius auratus (Goldfish)).